Consider the following 476-residue polypeptide: Splicing factor ESS-2 homolog (476 aa).

Methionine 1 is subject to N-acetylmethionine. Residues 1–18 (METPGASASSLLLPAASR) are compositionally biased toward low complexity. 2 disordered regions span residues 1-36 (METPGASASSLLLPAASRPPRKREAGEAGAATSKQR) and 91-148 (LGKM…LPSL). At threonine 3 the chain carries Phosphothreonine. Over residues 133–142 (DGEAGEEEEK) the composition is skewed to acidic residues. Residue lysine 142 forms a Glycyl lysine isopeptide (Lys-Gly) (interchain with G-Cter in SUMO2) linkage. Serine 292 is modified (phosphoserine). Phosphothreonine is present on threonine 386. 2 positions are modified to phosphoserine: serine 391 and serine 395. The tract at residues 413–465 (ALRASYTPSPARSTHLKTPASGLQTPTSTPAPGSATRTPLTQDPASITDNLLQ) is disordered. Over residues 437 to 451 (TPTSTPAPGSATRTP) the composition is skewed to low complexity. A compositionally biased stretch (polar residues) spans 452-463 (LTQDPASITDNL).

The protein belongs to the ESS2 family. Identified in the spliceosome C complex. Interacts with FRA10AC1. As to expression, highly expressed in heart, brain and skeletal muscle. Detected at low levels in placenta.

The protein localises to the nucleus. Functionally, may be involved in pre-mRNA splicing. The protein is Splicing factor ESS-2 homolog of Homo sapiens (Human).